The following is a 322-amino-acid chain: Quinolinate synthase (322 aa).

Positions 37 and 54 each coordinate iminosuccinate. Cys-99 is a binding site for [4Fe-4S] cluster. Iminosuccinate-binding positions include 125-127 and Ser-142; that span reads YIN. Residue Cys-185 participates in [4Fe-4S] cluster binding. Iminosuccinate is bound by residues 211-213 and Thr-228; that span reads HPE. Cys-278 is a binding site for [4Fe-4S] cluster.

It belongs to the quinolinate synthase family. Type 2 subfamily. [4Fe-4S] cluster is required as a cofactor.

The protein resides in the cytoplasm. The catalysed reaction is iminosuccinate + dihydroxyacetone phosphate = quinolinate + phosphate + 2 H2O + H(+). Its pathway is cofactor biosynthesis; NAD(+) biosynthesis; quinolinate from iminoaspartate: step 1/1. Its function is as follows. Catalyzes the condensation of iminoaspartate with dihydroxyacetone phosphate to form quinolinate. The chain is Quinolinate synthase from Chlorobaculum parvum (strain DSM 263 / NCIMB 8327) (Chlorobium vibrioforme subsp. thiosulfatophilum).